The primary structure comprises 464 residues: 3-deoxy-D-manno-octulosonic acid transferase (464 aa).

Residues M2–I22 form a helical; Signal-anchor membrane-spanning segment. Residues D47–D93 form the RPE1 insert domain. E107 (proton acceptor) is an active-site residue. CMP contacts are provided by residues P311 to R312, F352 to E354, and N377 to E380.

This sequence belongs to the glycosyltransferase group 1 family. Glycosyltransferase 30 subfamily.

The protein resides in the cell inner membrane. It catalyses the reaction lipid IVA (E. coli) + CMP-3-deoxy-beta-D-manno-octulosonate = alpha-Kdo-(2-&gt;6)-lipid IVA (E. coli) + CMP + H(+). Its pathway is bacterial outer membrane biogenesis; LPS core biosynthesis. Involved in lipopolysaccharide (LPS) biosynthesis. Catalyzes the transfer of 3-deoxy-D-manno-octulosonate (Kdo) residue(s) from CMP-Kdo to lipid IV(A), the tetraacyldisaccharide-1,4'-bisphosphate precursor of lipid A. The protein is 3-deoxy-D-manno-octulosonic acid transferase (waaA) of Rickettsia conorii (strain ATCC VR-613 / Malish 7).